Consider the following 208-residue polypeptide: Putative 3-methyladenine DNA glycosylase (208 aa).

It belongs to the DNA glycosylase MPG family.

This chain is Putative 3-methyladenine DNA glycosylase, found in Lactobacillus delbrueckii subsp. bulgaricus (strain ATCC 11842 / DSM 20081 / BCRC 10696 / JCM 1002 / NBRC 13953 / NCIMB 11778 / NCTC 12712 / WDCM 00102 / Lb 14).